The primary structure comprises 299 residues: GTPase Era (299 aa).

The Era-type G domain maps to K4–E171. The G1 stretch occupies residues G12–S19. G12–S19 lines the GTP pocket. The interval Q38–N42 is G2. The segment at D59–G62 is G3. GTP is bound by residues D59–I63 and N121–D124. The interval N121 to D124 is G4. A G5 region spans residues I150–A152. The KH type-2 domain occupies T202–K280.

This sequence belongs to the TRAFAC class TrmE-Era-EngA-EngB-Septin-like GTPase superfamily. Era GTPase family. Monomer.

It localises to the cytoplasm. It is found in the cell membrane. An essential GTPase that binds both GDP and GTP, with rapid nucleotide exchange. Plays a role in 16S rRNA processing and 30S ribosomal subunit biogenesis and possibly also in cell cycle regulation and energy metabolism. The polypeptide is GTPase Era (Streptococcus gordonii (strain Challis / ATCC 35105 / BCRC 15272 / CH1 / DL1 / V288)).